A 381-amino-acid polypeptide reads, in one-letter code: Probable serine/threonine-protein kinase PBL21 (381 aa).

C3 is lipidated: S-palmitoyl cysteine. Residues 78–354 (FREVNLLGEG…GDIVVALEYL (277 aa)) form the Protein kinase domain. ATP contacts are provided by residues 84 to 92 (LGEGGFGRV) and K106. Residue D204 is the Proton acceptor of the active site. The disordered stretch occupies residues 362–381 (EARNVSSPSPEISRTPRRDL).

Belongs to the protein kinase superfamily. Ser/Thr protein kinase family. Post-translationally, palmitoylation at Cys-3 and Cys-7 are required for plasma membrane location.

It is found in the cell membrane. It catalyses the reaction L-seryl-[protein] + ATP = O-phospho-L-seryl-[protein] + ADP + H(+). The catalysed reaction is L-threonyl-[protein] + ATP = O-phospho-L-threonyl-[protein] + ADP + H(+). Functionally, may be involved in plant defense signaling. This Arabidopsis thaliana (Mouse-ear cress) protein is Probable serine/threonine-protein kinase PBL21.